A 388-amino-acid chain; its full sequence is Glutamate 5-kinase (388 aa).

An ATP-binding site is contributed by lysine 21. Substrate is bound by residues serine 61, aspartate 148, and asparagine 160. ATP-binding positions include 180 to 181 (TD) and 222 to 228 (TGGMITK). Residues 285-363 (RGSVFLDPGA…RWLARELGAE (79 aa)) form the PUA domain.

Belongs to the glutamate 5-kinase family.

It localises to the cytoplasm. The catalysed reaction is L-glutamate + ATP = L-glutamyl 5-phosphate + ADP. The protein operates within amino-acid biosynthesis; L-proline biosynthesis; L-glutamate 5-semialdehyde from L-glutamate: step 1/2. Its function is as follows. Catalyzes the transfer of a phosphate group to glutamate to form L-glutamate 5-phosphate. The chain is Glutamate 5-kinase from Thermobifida fusca (strain YX).